A 251-amino-acid chain; its full sequence is 5'-nucleotidase SurE (251 aa).

A divalent metal cation is bound by residues Asp8, Asp9, Ser39, and Asn95.

The protein belongs to the SurE nucleotidase family. A divalent metal cation is required as a cofactor.

Its subcellular location is the cytoplasm. It catalyses the reaction a ribonucleoside 5'-phosphate + H2O = a ribonucleoside + phosphate. Its function is as follows. Nucleotidase that shows phosphatase activity on nucleoside 5'-monophosphates. This Clostridium botulinum (strain Alaska E43 / Type E3) protein is 5'-nucleotidase SurE.